The following is a 1305-amino-acid chain: Junctional cadherin 5-associated protein (1305 aa).

7 disordered regions span residues 13-86 (YKLS…PSTA), 120-151 (REQE…VGGR), 249-419 (GVPK…HTTA), 450-545 (KLDG…CEMQ), 575-604 (IPVK…EQSV), 616-795 (ALTG…SRQL), and 818-1005 (FNKE…GLSA). 4 stretches are compositionally biased toward basic and acidic residues: residues 21–31 (APHEDDGERRQ), 69–82 (PESR…HGER), 120–129 (REQEAREDPG), and 140–151 (HPREGPWEVGGR). The span at 337 to 358 (GLEPPVYVPPPSYKSPPQPAAH) shows a compositional bias: pro residues. The span at 360 to 369 (CPEEAVSRHE) shows a compositional bias: basic and acidic residues. Polar residues-rich tracts occupy residues 530 to 545 (LVSS…CEMQ) and 579 to 594 (SESQ…NDLK). Residues 595 to 604 (QSASLQEQSV) are compositionally biased toward low complexity. The segment covering 669–683 (QQTQTSFAHEPQSLQ) has biased composition (polar residues). The segment covering 729 to 748 (SPKSQGSLSPSSNSAFSGSS) has biased composition (low complexity). Ser841 carries the post-translational modification Phosphoserine. Basic and acidic residues-rich tracts occupy residues 878–889 (SKSESWSEEGRP) and 945–958 (AKPE…EQRE). 4 positions are modified to phosphoserine: Ser1004, Ser1010, Ser1152, and Ser1239. Disordered regions lie at residues 1062-1166 (GAQR…DVET) and 1234-1305 (SRAA…VERV). Basic and acidic residues predominate over residues 1276–1288 (ADGHPAARRENGG).

The protein localises to the cell junction. Its subcellular location is the adherens junction. The chain is Junctional cadherin 5-associated protein (JCAD) from Bos taurus (Bovine).